The sequence spans 323 residues: Formyl peptide receptor-related sequence 4 (323 aa).

Residues 1–29 (MEVNISMPLNGSEVVFYDSTTSRVLWILS) are Extracellular-facing. N-linked (GlcNAc...) asparagine glycosylation is found at asparagine 4 and asparagine 10. Residues 30-50 (LVVLFITFVLGVLGNGLVIWV) traverse the membrane as a helical segment. Over 51–66 (AGFQMAHTVTTVSYLN) the chain is Cytoplasmic. The helical transmembrane segment at 67–87 (LALSDLSFMATLPLHIISMVM) threads the bilayer. Topologically, residues 88 to 99 (RGKWLFGWFLCK) are extracellular. The cysteines at positions 98 and 176 are disulfide-linked. The helical transmembrane segment at 100-120 (LVHIIANINLFVSIFLITLIA) threads the bilayer. Residues 121–144 (MDRCICVLCPVWSQNHRTVSLARK) lie on the Cytoplasmic side of the membrane. A helical transmembrane segment spans residues 145 to 165 (VVLGAWIFALLLTLPHFLFLT). At 166 to 202 (TVRDARGDVYCISKFESWVATSEEQLKVSVIAATASG) the chain is on the extracellular side. The helical transmembrane segment at 203 to 223 (IINFIIGFSMPMSFIAICYGL) threads the bilayer. Residues 224–241 (MAAKICRRGFVNSSRPLR) lie on the Cytoplasmic side of the membrane. The chain crosses the membrane as a helical span at residues 242-262 (VLTAVAVSFFVCWFPFQLIML). Topologically, residues 263–280 (LGNIFNNETLSIIHMLVN) are extracellular. Asparagine 269 carries an N-linked (GlcNAc...) asparagine glycan. A helical transmembrane segment spans residues 281-301 (PANTLASFNSCLNPILYVFLG). Over 302–323 (QEFRDRLIYSLYASLERALRED) the chain is Cytoplasmic.

Belongs to the G-protein coupled receptor 1 family. Expressed in 0.6 % of a subset of sensory neurons located in the apical layer of the vomeronasal organ. Each neuron appears to express only one receptor gene.

It localises to the cell membrane. May have an olfactory function associated with the identification of pathogens or of pathogenic states. The polypeptide is Formyl peptide receptor-related sequence 4 (Fpr-rs4) (Mus musculus (Mouse)).